We begin with the raw amino-acid sequence, 124 residues long: MKILPPTLRVPRRYIAFEVISERELSREELVSLIWDSCLKLHGECETSNFRLWLMKLWRFDFPDAVRVRGILQCQRGYERRVMMALTCAHHHSGVRVAIHILGLSGTIRSATQKFIKPSKKDKY.

It belongs to the eukaryotic/archaeal RNase P protein component 2 family. In terms of assembly, consists of a catalytic RNA component and at least 4-5 protein subunits.

It is found in the cytoplasm. It catalyses the reaction Endonucleolytic cleavage of RNA, removing 5'-extranucleotides from tRNA precursor.. In terms of biological role, part of ribonuclease P, a protein complex that generates mature tRNA molecules by cleaving their 5'-ends. The polypeptide is Ribonuclease P protein component 2 (Methanothermobacter thermautotrophicus (strain ATCC 29096 / DSM 1053 / JCM 10044 / NBRC 100330 / Delta H) (Methanobacterium thermoautotrophicum)).